Here is a 329-residue protein sequence, read N- to C-terminus: MSFDPLPGTLENLLEQTSLKWIFVGGKGGVGKTTTSCSLAIQMSKVRSSVLLISTDPAHNLSDAFGTKFGKDARKVPGFDNLSAMEIDPNLSIQEMTEQADQQNPNNPLSGMMQDLAFTIPGIDEALAFAEILKQIKSMEFDCVIFDTAPTGHTLRFLNFPTVLEKALGKLGGLSSRFGPMINQMGSIMGVNANEQDLFGKMESMRANISEVNKQFKNPDLTTFVCVCISEFLSLYETERMIQELTSYEIDTHNIVVNQLLLDPNTTCPQCMARRKMQQKYLAQIEELYEDFHVVKVPQVPAEVRGTEALKSFSEMLVKPYVYPTSGKE.

27–34 (KGGVGKTT) contacts ATP. Residue Asp56 is part of the active site. 2 residues coordinate ATP: Glu231 and Asn258. Residues Cys268 and Cys271 each contribute to the Zn(2+) site.

The protein belongs to the arsA ATPase family. As to quaternary structure, homodimer.

Its subcellular location is the cytoplasm. It is found in the endoplasmic reticulum. The protein localises to the nucleus. ATPase required for the post-translational delivery of tail-anchored (TA) proteins to the endoplasmic reticulum. Recognizes and selectively binds the transmembrane domain of TA proteins in the cytosol. This complex then targets to the endoplasmic reticulum by membrane-bound receptors, where the tail-anchored protein is released for insertion. This process is regulated by ATP binding and hydrolysis. ATP binding drives the homodimer towards the closed dimer state, facilitating recognition of newly synthesized TA membrane proteins. ATP hydrolysis is required for insertion. Subsequently, the homodimer reverts towards the open dimer state, lowering its affinity for the membrane-bound receptor, and returning it to the cytosol to initiate a new round of targeting. In Schizosaccharomyces pombe (strain 972 / ATCC 24843) (Fission yeast), this protein is ATPase get3 (get3).